We begin with the raw amino-acid sequence, 399 residues long: Elongation factor Tu (399 aa).

The tr-type G domain maps to 10 to 209; that stretch reads KPHVNIGTIG…AVDEYIPEPT (200 aa). Residues 19 to 26 form a G1 region; it reads GHVDHGKT. 19-26 serves as a coordination point for GTP; it reads GHVDHGKT. Threonine 26 contributes to the Mg(2+) binding site. Residues 60 to 64 are G2; it reads GITIA. The segment at 81 to 84 is G3; it reads DCPG. GTP is bound by residues 81-85 and 136-139; these read DCPGH and NKED. The interval 136–139 is G4; it reads NKED. Residues 174 to 176 form a G5 region; that stretch reads SAK.

The protein belongs to the TRAFAC class translation factor GTPase superfamily. Classic translation factor GTPase family. EF-Tu/EF-1A subfamily. In terms of assembly, monomer.

The protein localises to the cytoplasm. The catalysed reaction is GTP + H2O = GDP + phosphate + H(+). In terms of biological role, GTP hydrolase that promotes the GTP-dependent binding of aminoacyl-tRNA to the A-site of ribosomes during protein biosynthesis. In Sulfurimonas denitrificans (strain ATCC 33889 / DSM 1251) (Thiomicrospira denitrificans (strain ATCC 33889 / DSM 1251)), this protein is Elongation factor Tu.